We begin with the raw amino-acid sequence, 170 residues long: Protein SprT (170 aa).

Residues 23-164 (QLARQHFSVE…CRQCGDKLKF (142 aa)) form the SprT-like domain. His-78 lines the Zn(2+) pocket. Glu-79 is an active-site residue. His-82 contacts Zn(2+).

It belongs to the SprT family. Zn(2+) serves as cofactor.

The protein localises to the cytoplasm. The chain is Protein SprT from Serratia proteamaculans (strain 568).